A 266-amino-acid polypeptide reads, in one-letter code: Hydroxyethylthiazole kinase (266 aa).

Position 44 (M44) interacts with substrate. Residues K120 and T166 each contribute to the ATP site. G193 lines the substrate pocket.

The protein belongs to the Thz kinase family. Mg(2+) is required as a cofactor.

It catalyses the reaction 5-(2-hydroxyethyl)-4-methylthiazole + ATP = 4-methyl-5-(2-phosphooxyethyl)-thiazole + ADP + H(+). It participates in cofactor biosynthesis; thiamine diphosphate biosynthesis; 4-methyl-5-(2-phosphoethyl)-thiazole from 5-(2-hydroxyethyl)-4-methylthiazole: step 1/1. Catalyzes the phosphorylation of the hydroxyl group of 4-methyl-5-beta-hydroxyethylthiazole (THZ). This is Hydroxyethylthiazole kinase from Syntrophomonas wolfei subsp. wolfei (strain DSM 2245B / Goettingen).